We begin with the raw amino-acid sequence, 652 residues long: Acetyl-coenzyme A synthetase (652 aa).

Residues 191 to 194, T311, and N335 each bind CoA; that span reads RAGR. ATP is bound by residues 387–389, 411–416, D500, and R515; these read GEP and DTWWQT. S523 provides a ligand contact to CoA. R526 is an ATP binding site. 3 residues coordinate Mg(2+): V537, H539, and I542. R584 lines the CoA pocket. K609 is modified (N6-acetyllysine).

This sequence belongs to the ATP-dependent AMP-binding enzyme family. Mg(2+) serves as cofactor. Acetylated. Deacetylation by the SIR2-homolog deacetylase activates the enzyme.

It catalyses the reaction acetate + ATP + CoA = acetyl-CoA + AMP + diphosphate. Functionally, catalyzes the conversion of acetate into acetyl-CoA (AcCoA), an essential intermediate at the junction of anabolic and catabolic pathways. Acs undergoes a two-step reaction. In the first half reaction, Acs combines acetate with ATP to form acetyl-adenylate (AcAMP) intermediate. In the second half reaction, it can then transfer the acetyl group from AcAMP to the sulfhydryl group of CoA, forming the product AcCoA. In terms of biological role, enables the cell to use acetate during aerobic growth to generate energy via the TCA cycle, and biosynthetic compounds via the glyoxylate shunt. Acetylates CheY, the response regulator involved in flagellar movement and chemotaxis. This chain is Acetyl-coenzyme A synthetase, found in Escherichia coli O157:H7.